Here is a 217-residue protein sequence, read N- to C-terminus: Probable transaldolase (217 aa).

Lys-83 (schiff-base intermediate with substrate) is an active-site residue.

It belongs to the transaldolase family. Type 3B subfamily.

Its subcellular location is the cytoplasm. The catalysed reaction is D-sedoheptulose 7-phosphate + D-glyceraldehyde 3-phosphate = D-erythrose 4-phosphate + beta-D-fructose 6-phosphate. It functions in the pathway carbohydrate degradation; pentose phosphate pathway; D-glyceraldehyde 3-phosphate and beta-D-fructose 6-phosphate from D-ribose 5-phosphate and D-xylulose 5-phosphate (non-oxidative stage): step 2/3. Functionally, transaldolase is important for the balance of metabolites in the pentose-phosphate pathway. This Aquifex aeolicus (strain VF5) protein is Probable transaldolase (tal).